A 122-amino-acid polypeptide reads, in one-letter code: Large ribosomal subunit protein uL14 (122 aa).

This sequence belongs to the universal ribosomal protein uL14 family. Part of the 50S ribosomal subunit. Forms a cluster with proteins L3 and L19. In the 70S ribosome, L14 and L19 interact and together make contacts with the 16S rRNA in bridges B5 and B8.

In terms of biological role, binds to 23S rRNA. Forms part of two intersubunit bridges in the 70S ribosome. The polypeptide is Large ribosomal subunit protein uL14 (Carboxydothermus hydrogenoformans (strain ATCC BAA-161 / DSM 6008 / Z-2901)).